The sequence spans 677 residues: Mitochondrial disaggregase (677 aa).

The transit peptide at 1 to 28 (MLGSLVSKRTAPAPRLLLQLLRSPSLRS) directs the protein to the mitochondrion. An autoinhibitory region spans residues 92 to 126 (PSPEDTLPGQDSWNGVLSRAGLGVWALATALVVHC). 4 ANK repeats span residues 133-162 (SKDAALMEAARANNVQEVSRLLSEGADVNA), 166-195 (LGWTALMVAAINRNDSVVQVLLAAGADPNL), 235-265 (KGCTALHYAVLADDYRTVKELLDGGANPLQR), and 268-297 (MGHTPLDYAREGEVMKLLRTSETKYQEKQR). ATP contacts are provided by His-316, Ile-318, Ser-353, Gly-354, Ile-355, Gly-356, Lys-357, Thr-358, Glu-425, and Asn-466. The interval 477–505 (LQLRQEALEMSRNRIAENLGDVQISDKIT) is regulatory; slows ATPase and disaggregase activities. Arg-531 contributes to the ATP binding site. The residue at position 559 (Lys-559) is an N6-acetyllysine. Position 590 (Arg-590) interacts with ATP.

The protein belongs to the ClpA/ClpB family. In terms of assembly, homododecamer when substrate-bound; the homododecamer consists of 2 homohexamers stacked head-to-head via ANK repeat-mediated interactions. The active substrate-bound form is likely to exist in a dynamic equilibrium between homohexamers and homododecamers. Homotetradecamer in the unbound state which is remodeled upon substrate binding into the homododecamer. Interacts with PHB and PHB2. Interacts with MAVS; the interaction is enhanced by Sendai virus infection. Post-translationally, proteolytically cleaved by protease PARL. ATP-dependent protein disaggregase activity is stimulated by PARL-mediated cleavage of the N-terminal autoinhibitory peptide.

The protein resides in the mitochondrion intermembrane space. It carries out the reaction ATP + H2O = ADP + phosphate + H(+). With respect to regulation, disaggregase activity is inhibited by ADP. Functionally, functions as a regulatory ATPase and participates in secretion/protein trafficking process. Has ATP-dependent protein disaggregase activity and is required to maintain the solubility of key mitochondrial proteins. Involved in mitochondrial-mediated antiviral innate immunity, activates RIG-I-mediated signal transduction and production of IFNB1 and pro-inflammatory cytokine IL6. Plays a role in granulocyte differentiation. This is Mitochondrial disaggregase from Bos taurus (Bovine).